A 762-amino-acid polypeptide reads, in one-letter code: uncharacterized protein (762 aa).

Positions 734–762 (QQRPRVAAAAPPPPPQPPAAAVPTTQAST) are disordered. The segment covering 743–753 (APPPPPQPPAA) has biased composition (pro residues).

This is an uncharacterized protein from Ostreid herpesvirus 1 (isolate France) (OsHV-1).